Reading from the N-terminus, the 492-residue chain is MQPQRDLRGLWLLLLSVFLLLFEVARAGRSVVSCPANCLCASNILSCSKQQLPNVPQSLPSYTALLDLSHNNLSRLRAEWTPTRLTNLHSLLLSHNHLNFISSEAFVPVPNLRYLDLSSNHLHTLDEFLFSDLQALEVLLLYNNHIVVVDRNAFEDMAQLQKLYLSQNQISRFPVELIKDGNKLPKLMLLDLSSNKLKKLPLTDLQKLPAWVKNGLYLHNNPLECDCKLYQLFSHWQYRQLSSVMDFQEDLYCMHSKKLHNIFSLDFFNCSEYKESAWEAHLGDTLTIRCDTKQQGMTKVWVSPSNEQVLSQGSNGSVSVRNGDLFFKKVQVEDGGVYTCYAMGETFNETLSVELKVYNFTLHGHHDTLNTAYTTLVGCILSVVLVLIYLYLTPCRCWCRGVEKPSSHQGDSLSSSMLSTTPNHDPMAGGDKDDGFDRRVAFLEPAGPGQGQNGKLKPGNTLPVPEATGKGQRRMSDPESVSSVFSDTPIVV.

Positions 1 to 27 (MQPQRDLRGLWLLLLSVFLLLFEVARA) are cleaved as a signal peptide. In terms of domain architecture, LRRNT spans 28–61 (GRSVVSCPANCLCASNILSCSKQQLPNVPQSLPS). The Extracellular portion of the chain corresponds to 28 to 371 (GRSVVSCPAN…LHGHHDTLNT (344 aa)). 2 cysteine pairs are disulfide-bonded: cysteine 34–cysteine 40 and cysteine 38–cysteine 47. 6 LRR repeats span residues 62–83 (YTAL…WTPT), 87–108 (NLHS…AFVP), 111–132 (NLRY…LFSD), 135–156 (ALEV…AFED), 159–180 (QLQK…LIKD), and 186–206 (KLML…TDLQ). N-linked (GlcNAc...) asparagine glycosylation is present at asparagine 72. An LRRCT domain is found at 208–272 (LPAWVKNGLY…FSLDFFNCSE (65 aa)). Cystine bridges form between cysteine 225–cysteine 253, cysteine 227–cysteine 270, and cysteine 290–cysteine 340. 4 N-linked (GlcNAc...) asparagine glycosylation sites follow: asparagine 269, asparagine 315, asparagine 348, and asparagine 359. Positions 269–352 (NCSEYKESAW…MGETFNETLS (84 aa)) constitute an Ig-like C2-type domain. Residues 372-392 (AYTTLVGCILSVVLVLIYLYL) traverse the membrane as a helical segment. The Cytoplasmic portion of the chain corresponds to 393 to 492 (TPCRCWCRGV…SVFSDTPIVV (100 aa)). The disordered stretch occupies residues 404-492 (KPSSHQGDSL…SVFSDTPIVV (89 aa)). Positions 407 to 423 (SHQGDSLSSSMLSTTPN) are enriched in polar residues. Positions 430–441 (GDKDDGFDRRVA) are enriched in basic and acidic residues. Phosphoserine is present on residues serine 476 and serine 480.

This sequence belongs to the immunoglobulin superfamily. AMIGO family. Homodimer, and heterodimer with AMIGO2 and AMIGO3. Interacts with KCNB1. Expressed in hippocampal and cortical neurons (at protein level). High levels in cerebellum, cerebrum, and retina. Low levels in liver, kidney, small intestine, spleen, lung and heart.

It is found in the cell membrane. It localises to the perikaryon. The protein localises to the cell projection. The protein resides in the dendrite. Promotes growth and fasciculation of neurites from cultured hippocampal neurons. May be involved in fasciculation as well as myelination of developing neural axons. May have a role in regeneration as well as neural plasticity in the adult nervous system. May mediate homophilic as well as heterophilic cell-cell interaction and contribute to signal transduction through its intracellular domain. Assembled with KCNB1 modulates the gating characteristics of the delayed rectifier voltage-dependent potassium channel KCNB1. The chain is Amphoterin-induced protein 1 from Mus musculus (Mouse).